The chain runs to 321 residues: Ribosomal RNA small subunit methyltransferase H (321 aa).

Residues 42 to 44, Asp62, Phe86, Asp107, and Gln114 contribute to the S-adenosyl-L-methionine site; that span reads GGH.

The protein belongs to the methyltransferase superfamily. RsmH family.

Its subcellular location is the cytoplasm. It catalyses the reaction cytidine(1402) in 16S rRNA + S-adenosyl-L-methionine = N(4)-methylcytidine(1402) in 16S rRNA + S-adenosyl-L-homocysteine + H(+). Specifically methylates the N4 position of cytidine in position 1402 (C1402) of 16S rRNA. In Herminiimonas arsenicoxydans, this protein is Ribosomal RNA small subunit methyltransferase H.